The following is a 732-amino-acid chain: 1,4-alpha-glucan branching enzyme GlgB 2 (732 aa).

The Nucleophile role is filled by aspartate 413. Glutamate 466 (proton donor) is an active-site residue.

Belongs to the glycosyl hydrolase 13 family. GlgB subfamily. Monomer.

The enzyme catalyses Transfers a segment of a (1-&gt;4)-alpha-D-glucan chain to a primary hydroxy group in a similar glucan chain.. Its pathway is glycan biosynthesis; glycogen biosynthesis. Catalyzes the formation of the alpha-1,6-glucosidic linkages in glycogen by scission of a 1,4-alpha-linked oligosaccharide from growing alpha-1,4-glucan chains and the subsequent attachment of the oligosaccharide to the alpha-1,6 position. The protein is 1,4-alpha-glucan branching enzyme GlgB 2 of Rhizobium etli (strain ATCC 51251 / DSM 11541 / JCM 21823 / NBRC 15573 / CFN 42).